We begin with the raw amino-acid sequence, 427 residues long: 3-phosphoshikimate 1-carboxyvinyltransferase (427 aa).

3 residues coordinate 3-phosphoshikimate: Lys20, Ser21, and Arg25. Lys20 lines the phosphoenolpyruvate pocket. The phosphoenolpyruvate site is built by Gly92 and Arg120. Residues Ser166, Gln168, Asp312, and Lys339 each coordinate 3-phosphoshikimate. Gln168 provides a ligand contact to phosphoenolpyruvate. The Proton acceptor role is filled by Asp312. Residues Arg343 and Arg385 each coordinate phosphoenolpyruvate.

It belongs to the EPSP synthase family. As to quaternary structure, monomer.

Its subcellular location is the cytoplasm. The catalysed reaction is 3-phosphoshikimate + phosphoenolpyruvate = 5-O-(1-carboxyvinyl)-3-phosphoshikimate + phosphate. It functions in the pathway metabolic intermediate biosynthesis; chorismate biosynthesis; chorismate from D-erythrose 4-phosphate and phosphoenolpyruvate: step 6/7. Its function is as follows. Catalyzes the transfer of the enolpyruvyl moiety of phosphoenolpyruvate (PEP) to the 5-hydroxyl of shikimate-3-phosphate (S3P) to produce enolpyruvyl shikimate-3-phosphate and inorganic phosphate. The chain is 3-phosphoshikimate 1-carboxyvinyltransferase from Streptococcus equi subsp. zooepidemicus (strain H70).